We begin with the raw amino-acid sequence, 407 residues long: MPRGQKSKLRARGKRRETHDQPQGLTGPQATAEKQEESRSSSSSSAVCQGARRRSSGSSVPQESQGASPTGYPDAGASCSKYDVAAMGQDEKSPSTSRDASVSQESQGASPIGPPDAGISCSKSDEAAKGQNEKSPSTSRDASVPQESQGASPTGSPDADVSGSKSDVAAKGQDEESLSSSKRAAFFTTTDGDPIKRKANKMVQFLQKKFEKKEPILKADMLKRLRRQYKPCFPEILKRTSEHLTVFFGVELKETDSSGESYTLVSKLGLSNEGSLSGDNALPKSGLLMSILGLIFMRGNRATEEEVWKFLGLLGIYDGILHSIYGDARKIITEDLVQDKYVVYRQVCNSDPPCYEFLWGPRAYAETTKMRVLRVLAEINNTSPGLYPHLYEDALTDEVERALRLRA.

Residues M1–R16 show a composition bias toward basic residues. The tract at residues M1 to A185 is disordered. Composition is skewed to polar residues over residues S56–S68 and P94–A109. Residues K123–N132 show a composition bias toward basic and acidic residues. Polar residues predominate over residues E133–G155. Residues I195–A394 enclose the MAGE domain.

The protein is Melanoma-associated antigen B6B of Homo sapiens (Human).